The primary structure comprises 445 residues: Phosphoglucosamine mutase (445 aa).

Ser-103 serves as the catalytic Phosphoserine intermediate. Ser-103, Asp-240, Asp-242, and Asp-244 together coordinate Mg(2+). The residue at position 103 (Ser-103) is a Phosphoserine.

It belongs to the phosphohexose mutase family. The cofactor is Mg(2+). Post-translationally, activated by phosphorylation.

The enzyme catalyses alpha-D-glucosamine 1-phosphate = D-glucosamine 6-phosphate. In terms of biological role, catalyzes the conversion of glucosamine-6-phosphate to glucosamine-1-phosphate. The protein is Phosphoglucosamine mutase of Cellvibrio japonicus (strain Ueda107) (Pseudomonas fluorescens subsp. cellulosa).